Reading from the N-terminus, the 412-residue chain is DNA replication and repair protein RecF (412 aa).

30–37 provides a ligand contact to ATP; sequence GANGAGKT. The tract at residues 369-412 is disordered; the sequence is LQVRPGGGTAAVTPDPEYARGEATAANGAASAPTGADAASTSRD. A compositionally biased stretch (low complexity) spans 389 to 412; the sequence is GEATAANGAASAPTGADAASTSRD.

It belongs to the RecF family.

It localises to the cytoplasm. The RecF protein is involved in DNA metabolism; it is required for DNA replication and normal SOS inducibility. RecF binds preferentially to single-stranded, linear DNA. It also seems to bind ATP. This chain is DNA replication and repair protein RecF, found in Salinibacter ruber (strain DSM 13855 / M31).